The following is a 307-amino-acid chain: Oligopeptide transport ATP-binding protein OppF (307 aa).

The region spanning 6–251 (VEVKDLEISF…PIHPYTQSLL (246 aa)) is the ABC transporter domain. 42–49 (GESGSGKT) provides a ligand contact to ATP.

Belongs to the ABC transporter superfamily. As to quaternary structure, the complex is composed of two ATP-binding proteins (OppD and OppF), two transmembrane proteins (OppB and OppC) and a solute-binding protein (OppA).

It is found in the cell membrane. The enzyme catalyses a [peptide](out) + ATP + H2O = a [peptide](in) + ADP + phosphate + H(+). Its function is as follows. Part of the ABC transporter complex OppABCDF involved in the uptake of oligopeptides. Probably responsible for energy coupling to the transport system. The sequence is that of Oligopeptide transport ATP-binding protein OppF (oppF) from Streptococcus pyogenes serotype M1.